A 389-amino-acid chain; its full sequence is Sulfate adenylyltransferase (389 aa).

Belongs to the sulfate adenylyltransferase family.

The enzyme catalyses sulfate + ATP + H(+) = adenosine 5'-phosphosulfate + diphosphate. Its pathway is sulfur metabolism; hydrogen sulfide biosynthesis; sulfite from sulfate: step 1/3. The chain is Sulfate adenylyltransferase from Hyperthermus butylicus (strain DSM 5456 / JCM 9403 / PLM1-5).